The following is a 153-amino-acid chain: UPF0260 protein YcgN (153 aa).

The protein belongs to the UPF0260 family.

The protein is UPF0260 protein YcgN of Salmonella dublin (strain CT_02021853).